A 66-amino-acid chain; its full sequence is Large ribosomal subunit protein bL35 (66 aa).

A compositionally biased stretch (basic residues) spans 1-15 (MPKMKTKSSAKKRFK). The disordered stretch occupies residues 1-32 (MPKMKTKSSAKKRFKMTATGKVRAGQAGKRHG).

The protein belongs to the bacterial ribosomal protein bL35 family.

The sequence is that of Large ribosomal subunit protein bL35 from Dinoroseobacter shibae (strain DSM 16493 / NCIMB 14021 / DFL 12).